The chain runs to 388 residues: Glycoprotein-N-acetylgalactosamine 3-beta-galactosyltransferase 1 (388 aa).

Topologically, residues 1–12 (MAPISHYIGKTS) are cytoplasmic. The chain crosses the membrane as a helical; Signal-anchor for type II membrane protein span at residues 13-30 (LTTLAIGIAIGITVSNIV). The Lumenal segment spans residues 31 to 388 (KFSSTQRRHF…LAQTDSKHIS (358 aa)). The tract at residues 43–65 (SGYIPDSPHSHGENDFVEGPDDS) is disordered. N80 carries an N-linked (GlcNAc...) asparagine glycan. A disulfide bridge connects residues C95 and C119. The UDP site is built by M98, N100, E142, G143, R144, K150, and D173. Mn(2+) contacts are provided by D173 and D175. An intrachain disulfide couples C238 to C253. W292 is a binding site for a glycoprotein. A disulfide bond links C307 and C308. UDP-binding residues include H316 and Y317. H316 serves as a coordination point for Mn(2+). The segment at 344-388 (STEEQDHGSSHKDTDAMKPEGKGMEDKEDEETNISLAQTDSKHIS) is disordered. Positions 347 to 368 (EQDHGSSHKDTDAMKPEGKGME) are enriched in basic and acidic residues. N376 is a glycosylation site (N-linked (GlcNAc...) asparagine).

This sequence belongs to the glycosyltransferase 31 family. Beta3-Gal-T subfamily. Homodimer; disulfide-linked. Requires Mn(2+) as cofactor.

The protein localises to the membrane. It catalyses the reaction an N-acetyl-alpha-D-galactosaminyl derivative + UDP-alpha-D-galactose = a beta-D-galactosyl-(1-&gt;3)-N-acetyl-alpha-D-galactosaminyl derivative + UDP + H(+). It functions in the pathway protein modification; protein glycosylation. In terms of biological role, glycosyltransferase that generates the core 1 O-glycan Gal-beta1-3GalNAc-alpha1-Ser/Thr (T antigen), which is a precursor for many extended O-glycans in glycoproteins. This Biomphalaria glabrata (Bloodfluke planorb) protein is Glycoprotein-N-acetylgalactosamine 3-beta-galactosyltransferase 1.